The sequence spans 155 residues: Small ribosomal subunit protein bS6 (155 aa).

Positions 94 to 155 (EEHETEPSAM…RDDNSDGGQE (62 aa)) are disordered. Residues 107 to 149 (RGDRGDRGDRRGGDRFGDRDRGDRGDRGSSRFGDRERPRRDDN) are compositionally biased toward basic and acidic residues.

This sequence belongs to the bacterial ribosomal protein bS6 family.

Functionally, binds together with bS18 to 16S ribosomal RNA. The sequence is that of Small ribosomal subunit protein bS6 from Parvibaculum lavamentivorans (strain DS-1 / DSM 13023 / NCIMB 13966).